Here is a 56-residue protein sequence, read N- to C-terminus: Large ribosomal subunit protein bL33 (56 aa).

Belongs to the bacterial ribosomal protein bL33 family.

This Rickettsia typhi (strain ATCC VR-144 / Wilmington) protein is Large ribosomal subunit protein bL33.